The primary structure comprises 211 residues: PITH domain-containing protein CG6153 (211 aa).

The 173-residue stretch at 20-192 folds into the PITH domain; that stretch reads DHALEMGIEY…GVTICNYESR (173 aa).

It belongs to the PITHD1 family.

The polypeptide is PITH domain-containing protein CG6153 (Drosophila melanogaster (Fruit fly)).